A 639-amino-acid chain; its full sequence is Bone morphogenetic protein 1 homolog (639 aa).

A signal peptide spans 1–23; it reads MDLLYYMTVSLLGFILSLTTFIG. A propeptide spanning residues 24-109 is cleaved from the precursor; that stretch reads ETTRALSDDV…RAVTARPERR (86 aa). One can recognise a Peptidase M12A domain in the interval 100–305; it reads RAVTARPERR…IQANLLYKCP (206 aa). N-linked (GlcNAc...) asparagine glycans are attached at residues Asn-122 and Asn-140. Intrachain disulfides connect Cys-143-Cys-304, Cys-167-Cys-189, Cys-169-Cys-170, Cys-307-Cys-333, Cys-360-Cys-382, and Cys-420-Cys-446. His-197 serves as a coordination point for Zn(2+). Residue Glu-198 is part of the active site. 2 residues coordinate Zn(2+): His-201 and His-207. CUB domains follow at residues 307 to 419 and 420 to 531; these read CGRT…YEAI and CGGH…DFFK. A glycan (N-linked (GlcNAc...) asparagine) is linked at Asn-317. A glycan (N-linked (GlcNAc...) asparagine) is linked at Asn-455. Disulfide bonds link Cys-473–Cys-495, Cys-536–Cys-548, Cys-544–Cys-557, and Cys-559–Cys-572. Residues 532–573 enclose the EGF-like; calcium-binding domain; sequence EKDECAQPDQGGCMDVCVNTIGSYRCDCRPGYELSSDGRRCE.

It depends on Zn(2+) as a cofactor. As to expression, ectodermal and primary mesenchyme cells in hatched blastula.

In Strongylocentrotus purpuratus (Purple sea urchin), this protein is Bone morphogenetic protein 1 homolog.